The sequence spans 281 residues: Aminoglycoside N(3)-acetyltransferase IX (281 aa).

Belongs to the antibiotic N-acetyltransferase family.

It carries out the reaction a 2-deoxystreptamine antibiotic + acetyl-CoA = an N(3)-acetyl-2-deoxystreptamine antibiotic + CoA + H(+). In terms of biological role, resistance to neomycin. The sequence is that of Aminoglycoside N(3)-acetyltransferase IX (aacC9) from Micromonospora chalcea.